A 69-amino-acid polypeptide reads, in one-letter code: Guanine nucleotide-binding protein G(I)/G(S)/G(O) subunit gamma-T2 (69 aa).

A Cysteine methyl ester modification is found at Cys-66. Cys-66 carries the S-farnesyl cysteine lipid modification. A propeptide spans 67–69 (VLS) (removed in mature form).

The protein belongs to the G protein gamma family. As to quaternary structure, g proteins are composed of 3 units, alpha, beta and gamma.

It localises to the cell membrane. Functionally, guanine nucleotide-binding proteins (G proteins) are involved as a modulator or transducer in various transmembrane signaling systems. The beta and gamma chains are required for the GTPase activity, for replacement of GDP by GTP, and for G protein-effector interaction. The polypeptide is Guanine nucleotide-binding protein G(I)/G(S)/G(O) subunit gamma-T2 (Gngt2) (Mus musculus (Mouse)).